A 39-amino-acid chain; its full sequence is ORF8a protein (39 aa).

The N-terminal stretch at 1–15 (MKLLIVLTCISLCSC) is a signal peptide. Residues 16-39 (ICTVVQRCASNKPHVLEDPCKVQH) enclose the SARS ORF8 Ig-like domain.

The sequence is that of ORF8a protein from Homo sapiens (Human).